Reading from the N-terminus, the 609-residue chain is Mitochondrial nucleoid-associated protein 1 (609 aa).

Residues 1 to 552 (MSDNPPRMEV…IRCNTTIRKS (552 aa)) are Mitochondrial matrix-facing. Disordered stretches follow at residues 142 to 168 (ASEK…NPSE), 183 to 202 (SNQD…TTSG), and 410 to 441 (QLSL…HTPQ). Residues 146–161 (TSPKRELAKDLPKSGE) show a composition bias toward basic and acidic residues. The segment covering 418-441 (DSQFQASHTGCQSPLCSAQRHTPQ) has biased composition (polar residues). A helical membrane pass occupies residues 553–573 (GFGGITMLFTGYFVLCCSWSF). At 574–609 (RRLKKLCRPLPWKSTVPPCIGVAKTTGDCRSKTCLD) the chain is on the mitochondrial intermembrane side.

It localises to the mitochondrion inner membrane. The protein localises to the mitochondrion matrix. Its subcellular location is the mitochondrion nucleoid. Its function is as follows. Critical regulator of mitochondrial DNA (mtDNA) abundance. Binds dsDNA throughout the mitochondrial genome without sequence specificity and controls mtDNA copy number by promoting its replication. Also plays important roles in mitochondrial metabolism and cell proliferation. The protein is Mitochondrial nucleoid-associated protein 1 of Homo sapiens (Human).